A 334-amino-acid polypeptide reads, in one-letter code: Glycerol-1-phosphate dehydrogenase [NAD(P)+] (334 aa).

Residues 77-81 and 99-102 each bind NAD(+); these read GRPID and TTAS. Residue Asp-104 participates in substrate binding. Ser-108 serves as a coordination point for NAD(+). Asp-147 is a binding site for substrate. Zn(2+)-binding residues include Asp-147 and His-225. His-229 contacts substrate. His-246 serves as a coordination point for Zn(2+).

It belongs to the glycerol-1-phosphate dehydrogenase family. It depends on Zn(2+) as a cofactor.

The protein localises to the cytoplasm. The catalysed reaction is sn-glycerol 1-phosphate + NAD(+) = dihydroxyacetone phosphate + NADH + H(+). It catalyses the reaction sn-glycerol 1-phosphate + NADP(+) = dihydroxyacetone phosphate + NADPH + H(+). It functions in the pathway membrane lipid metabolism; glycerophospholipid metabolism. Catalyzes the NAD(P)H-dependent reduction of dihydroxyacetonephosphate (DHAP or glycerone phosphate) to glycerol 1-phosphate (G1P). The G1P thus generated is used as the glycerophosphate backbone of phospholipids in the cellular membranes of Archaea. The chain is Glycerol-1-phosphate dehydrogenase [NAD(P)+] from Methanococcus maripaludis (strain C5 / ATCC BAA-1333).